A 474-amino-acid chain; its full sequence is MTENSELNNKISTIKLKKLIEIQNLTDNMNGTVIRIRGFIESITSCSSQIFILLRDRLEKVQCIIFKSTNVSSIYEFSRLKKLPLESFIEIEGQVVFAEIPIKRATKQNIEIVISTLNILGPVVSKLPFQLKDCKIAGKESDTNTITVGYNLRLDNRFLDFRLPVTQSIIKIIDQTMYTFRTYLRTHEFIEIKTSKIIQSGSEGGANLFSLNYFNKPAYLAQSPQLYKQLAIIGGLKRVYEIGHVYRAEVSNINRYLSEFVGLDIEMEMETTYIDFIHFLHSLFINIFESFKNEMKKELEIIRQYYEFVDLKYRSTPIIITYKDAVDMLKSKNIQIDYGCDFSREHERILGKIIKDKEDIDIFTIIDYPSSIRAFYSYIDETTKLTRSYDFIVRGEEILSGAQRENRYDYLKNAVIDKGLNPENLKNYLEAFKYGAPPHIGCGIGLERFLKAYFGFDDIRYFSLFPRDPNRIFP.

E203 serves as a coordination point for L-aspartate. An aspartate region spans residues 225 to 228; it reads QLYK. R247 provides a ligand contact to L-aspartate. Residues 247–249, 255–257, and E397 contribute to the ATP site; these read RAE and RYL. L-aspartate contacts are provided by S400 and R404. ATP is bound at residue 445-448; it reads GLER.

This sequence belongs to the class-II aminoacyl-tRNA synthetase family. Type 2 subfamily. Homodimer.

The protein resides in the cytoplasm. The enzyme catalyses tRNA(Asp) + L-aspartate + ATP = L-aspartyl-tRNA(Asp) + AMP + diphosphate. The protein is Probable aspartate--tRNA ligase, cytoplasmic of Enterocytozoon bieneusi (strain H348) (Microsporidian parasite).